The sequence spans 162 residues: Putative pre-16S rRNA nuclease (162 aa).

This sequence belongs to the YqgF nuclease family.

It is found in the cytoplasm. Its function is as follows. Could be a nuclease involved in processing of the 5'-end of pre-16S rRNA. This is Putative pre-16S rRNA nuclease from Brucella melitensis biotype 2 (strain ATCC 23457).